Here is a 297-residue protein sequence, read N- to C-terminus: Protease HtpX homolog (297 aa).

Transmembrane regions (helical) follow at residues 5-25 (IFLFILTNLLVITTIGIVLTI) and 43-63 (LMALLVFSLVVGFVGSFISLG). Position 154 (His154) interacts with Zn(2+). Glu155 is a catalytic residue. His158 contributes to the Zn(2+) binding site. Transmembrane regions (helical) follow at residues 169 to 189 (LLQGIVNTFVVFLSRIAAWVA) and 203 to 223 (FIAMIVFQIIFSILGSLVVFA). A Zn(2+)-binding site is contributed by Glu229.

The protein belongs to the peptidase M48B family. Zn(2+) serves as cofactor.

The protein resides in the cell membrane. In Bacillus velezensis (strain DSM 23117 / BGSC 10A6 / LMG 26770 / FZB42) (Bacillus amyloliquefaciens subsp. plantarum), this protein is Protease HtpX homolog.